A 205-amino-acid chain; its full sequence is Lymphotoxin-alpha (205 aa).

A signal peptide spans 1 to 34 (MTPPERLFLSRVRGTPLHLLLLGLLLVLLPGAQG). An O-linked (GalNAc...) threonine glycan is attached at T41. A THD domain is found at 63–205 (PAAHLIGDPS…STVFFGAFAL (143 aa)). N-linked (GlcNAc...) asparagine glycosylation occurs at N96.

Belongs to the tumor necrosis factor family. As to quaternary structure, homotrimer, and heterotrimer of either two LTB and one LTA subunits or (less prevalent) two LTA and one LTB subunits. Interacts with TNFRSF14.

It is found in the secreted. The protein resides in the membrane. Its function is as follows. Cytokine that in its homotrimeric form binds to TNFRSF1A/TNFR1, TNFRSF1B/TNFBR and TNFRSF14/HVEM. In its heterotrimeric form with LTB binds to TNFRSF3/LTBR. Lymphotoxin is produced by lymphocytes and is cytotoxic for a wide range of tumor cells in vitro and in vivo. The protein is Lymphotoxin-alpha (LTA) of Macaca mulatta (Rhesus macaque).